The chain runs to 248 residues: N-acylneuraminate-9-phosphatase (248 aa).

Residue Asp-12 coordinates Mg(2+). Phosphate contacts are provided by Leu-13, Asp-14, Thr-131, Asn-132, and Lys-164. Position 14 (Asp-14) interacts with Mg(2+). A Mg(2+)-binding site is contributed by Asp-189.

Belongs to the HAD-like hydrolase superfamily. NANP family. It depends on Mg(2+) as a cofactor.

The catalysed reaction is N-acetylneuraminate 9-phosphate + H2O = N-acetylneuraminate + phosphate. It carries out the reaction N-glycoloylneuraminate 9-phosphate + H2O = N-glycoloylneuraminate + phosphate. The protein operates within amino-sugar metabolism; N-acetylneuraminate biosynthesis. Its activity is regulated as follows. Inhibited by calcium. Inhibited by vanadate, sodium orthovanadate and phosphonate. Its function is as follows. Catalyzes the dephosphorylation of N-acylneuraminate 9-phosphate (Neu5Ac-9-P) to N-acetylneuraminic acid (Neu5Ac or sialic acid). Can also use N-glycoloylneuraminate 9-phosphate as substrate. The sequence is that of N-acylneuraminate-9-phosphatase from Rattus norvegicus (Rat).